We begin with the raw amino-acid sequence, 181 residues long: Acetolactate synthase small subunit (181 aa).

The ACT domain maps to 4–78; the sequence is TLSVLVEDES…NVLKIQDITN (75 aa).

This sequence belongs to the acetolactate synthase small subunit family. Dimer of large and small chains.

Its subcellular location is the plastid. The protein resides in the chloroplast. It carries out the reaction 2 pyruvate + H(+) = (2S)-2-acetolactate + CO2. The protein operates within amino-acid biosynthesis; L-isoleucine biosynthesis; L-isoleucine from 2-oxobutanoate: step 1/4. It functions in the pathway amino-acid biosynthesis; L-valine biosynthesis; L-valine from pyruvate: step 1/4. The sequence is that of Acetolactate synthase small subunit (ilvH) from Galdieria sulphuraria (Red alga).